Consider the following 107-residue polypeptide: YcgL domain-containing protein Psyc_0800 (107 aa).

The YcgL domain maps to 1–95 (MHCDIYKFLK…QDVMRRQAEL (95 aa)).

This Psychrobacter arcticus (strain DSM 17307 / VKM B-2377 / 273-4) protein is YcgL domain-containing protein Psyc_0800.